A 196-amino-acid chain; its full sequence is Imidazole glycerol phosphate synthase subunit HisH (196 aa).

Positions 2–196 (NVVILDTGCA…AQLLKNFLEM (195 aa)) constitute a Glutamine amidotransferase type-1 domain. Residue cysteine 77 is the Nucleophile of the active site. Catalysis depends on residues histidine 178 and glutamate 180.

As to quaternary structure, heterodimer of HisH and HisF.

It localises to the cytoplasm. The enzyme catalyses 5-[(5-phospho-1-deoxy-D-ribulos-1-ylimino)methylamino]-1-(5-phospho-beta-D-ribosyl)imidazole-4-carboxamide + L-glutamine = D-erythro-1-(imidazol-4-yl)glycerol 3-phosphate + 5-amino-1-(5-phospho-beta-D-ribosyl)imidazole-4-carboxamide + L-glutamate + H(+). It carries out the reaction L-glutamine + H2O = L-glutamate + NH4(+). The protein operates within amino-acid biosynthesis; L-histidine biosynthesis; L-histidine from 5-phospho-alpha-D-ribose 1-diphosphate: step 5/9. IGPS catalyzes the conversion of PRFAR and glutamine to IGP, AICAR and glutamate. The HisH subunit catalyzes the hydrolysis of glutamine to glutamate and ammonia as part of the synthesis of IGP and AICAR. The resulting ammonia molecule is channeled to the active site of HisF. The sequence is that of Imidazole glycerol phosphate synthase subunit HisH from Salmonella choleraesuis (strain SC-B67).